We begin with the raw amino-acid sequence, 262 residues long: Hydroxyethylthiazole kinase (262 aa).

Position 39 (Met-39) interacts with substrate. ATP is bound by residues Lys-115 and Thr-160. Gly-187 lines the substrate pocket.

This sequence belongs to the Thz kinase family. Mg(2+) serves as cofactor.

It catalyses the reaction 5-(2-hydroxyethyl)-4-methylthiazole + ATP = 4-methyl-5-(2-phosphooxyethyl)-thiazole + ADP + H(+). Its pathway is cofactor biosynthesis; thiamine diphosphate biosynthesis; 4-methyl-5-(2-phosphoethyl)-thiazole from 5-(2-hydroxyethyl)-4-methylthiazole: step 1/1. Catalyzes the phosphorylation of the hydroxyl group of 4-methyl-5-beta-hydroxyethylthiazole (THZ). This Staphylococcus epidermidis (strain ATCC 35984 / DSM 28319 / BCRC 17069 / CCUG 31568 / BM 3577 / RP62A) protein is Hydroxyethylthiazole kinase.